Here is a 147-residue protein sequence, read N- to C-terminus: Lysozyme C (147 aa).

Positions 1-18 (MKVLLLLGFIFCSMAAHG) are cleaved as a signal peptide. One can recognise a C-type lysozyme domain in the interval 19–147 (KRMERCEFAR…LSKYLEGCHL (129 aa)). 4 cysteine pairs are disulfide-bonded: cysteine 24–cysteine 145, cysteine 48–cysteine 133, cysteine 83–cysteine 99, and cysteine 95–cysteine 113. Catalysis depends on residues glutamate 53 and aspartate 71.

The protein belongs to the glycosyl hydrolase 22 family. In terms of assembly, monomer.

The protein localises to the secreted. The catalysed reaction is Hydrolysis of (1-&gt;4)-beta-linkages between N-acetylmuramic acid and N-acetyl-D-glucosamine residues in a peptidoglycan and between N-acetyl-D-glucosamine residues in chitodextrins.. In terms of biological role, lysozymes have primarily a bacteriolytic function; those in tissues and body fluids are associated with the monocyte-macrophage system and enhance the activity of immunoagents. This Trichosurus vulpecula (Brush-tailed possum) protein is Lysozyme C (LYZ).